The chain runs to 377 residues: Putative glutamate--cysteine ligase 2 (377 aa).

It belongs to the glutamate--cysteine ligase type 2 family. YbdK subfamily.

The enzyme catalyses L-cysteine + L-glutamate + ATP = gamma-L-glutamyl-L-cysteine + ADP + phosphate + H(+). Functionally, ATP-dependent carboxylate-amine ligase which exhibits weak glutamate--cysteine ligase activity. The protein is Putative glutamate--cysteine ligase 2 of Chromobacterium violaceum (strain ATCC 12472 / DSM 30191 / JCM 1249 / CCUG 213 / NBRC 12614 / NCIMB 9131 / NCTC 9757 / MK).